The sequence spans 368 residues: Glycolate oxidase 3 (368 aa).

At Met1 the chain carries N-acetylmethionine. Residues Met1 to Asp359 form the FMN hydroxy acid dehydrogenase domain. Residue Tyr24 coordinates glyoxylate. Residues Pro77–Ala79, Ser106, Gln127–Tyr129, and Thr155 each bind FMN. Tyr129 serves as a coordination point for glyoxylate. Glyoxylate is bound at residue Arg164. The FMN site is built by Lys230 and Ser252. The glyoxylate site is built by His254 and Arg257. His254 acts as the Proton acceptor in catalysis. FMN-binding positions include Asp285 to Arg289 and Gly308 to Arg309.

This sequence belongs to the FMN-dependent alpha-hydroxy acid dehydrogenase family. In terms of assembly, homotetramer. The cofactor is FMN.

It localises to the peroxisome. The catalysed reaction is glycolate + O2 = glyoxylate + H2O2. The protein operates within photosynthesis; photorespiration; glycine from 2-phosphoglycolate: step 2/3. In terms of biological role, catalyzes the oxidation of glycolate to glyoxylate, with a reduction of O2 to H2O2. Is a key enzyme in photorespiration in green plants. This chain is Glycolate oxidase 3 (GLO5), found in Arabidopsis thaliana (Mouse-ear cress).